A 758-amino-acid chain; its full sequence is Meiotic driver SPOK4 (758 aa).

Positions 4 to 41 (KDRITQLLRKLEEAKAREEEAKAREAQERCEKERLQLE) form a coiled coil. Disordered stretches follow at residues 180–230 (ELTQ…GVGI) and 414–499 (LSSA…MADP). Residues 181–190 (LTQEDDRSSG) are compositionally biased toward basic and acidic residues. Polar residues predominate over residues 416-429 (SAASSQNTENSEYT). Residues 457–468 (NEHDEHDEDHSE) are compositionally biased toward basic and acidic residues.

It is found in the cytoplasm. The protein localises to the nucleus. Promotes unequal transmission of alleles from the parental zygote to progeny spores by acting as poison/antidote system, leading to poisoning of progeny that do not inherit the allele. May possess DNA nuclease activity that leads to spore killing, and a kinase activity that confers resistance to the nuclease activity. Can suppress meiotic drive by the P.comata SPOK1 protein. The polypeptide is Meiotic driver SPOK4 (Podospora anserina (Pleurage anserina)).